The chain runs to 266 residues: Hydroxyethylthiazole kinase (266 aa).

Residue M46 participates in substrate binding. ATP is bound by residues K122 and T166. G193 serves as a coordination point for substrate.

This sequence belongs to the Thz kinase family. Mg(2+) serves as cofactor.

It carries out the reaction 5-(2-hydroxyethyl)-4-methylthiazole + ATP = 4-methyl-5-(2-phosphooxyethyl)-thiazole + ADP + H(+). The protein operates within cofactor biosynthesis; thiamine diphosphate biosynthesis; 4-methyl-5-(2-phosphoethyl)-thiazole from 5-(2-hydroxyethyl)-4-methylthiazole: step 1/1. Catalyzes the phosphorylation of the hydroxyl group of 4-methyl-5-beta-hydroxyethylthiazole (THZ). This Caldivirga maquilingensis (strain ATCC 700844 / DSM 13496 / JCM 10307 / IC-167) protein is Hydroxyethylthiazole kinase.